Reading from the N-terminus, the 290-residue chain is tRNA dimethylallyltransferase (290 aa).

11-18 contacts ATP; the sequence is GPTASGKS. 13–18 contributes to the substrate binding site; the sequence is TASGKS. Interaction with substrate tRNA stretches follow at residues 36-39 and 158-162; these read DSMQ and QRIVR.

The protein belongs to the IPP transferase family. In terms of assembly, monomer. The cofactor is Mg(2+).

It carries out the reaction adenosine(37) in tRNA + dimethylallyl diphosphate = N(6)-dimethylallyladenosine(37) in tRNA + diphosphate. Functionally, catalyzes the transfer of a dimethylallyl group onto the adenine at position 37 in tRNAs that read codons beginning with uridine, leading to the formation of N6-(dimethylallyl)adenosine (i(6)A). This chain is tRNA dimethylallyltransferase, found in Bartonella tribocorum (strain CIP 105476 / IBS 506).